A 397-amino-acid polypeptide reads, in one-letter code: F-box protein At3g49450 (397 aa).

The F-box domain occupies 26 to 75 (GENSGTLPTDLMVEILSRVPAKSAARFRCVSNDWNSLLRSPYLTNLFLKR).

This is F-box protein At3g49450 from Arabidopsis thaliana (Mouse-ear cress).